Reading from the N-terminus, the 252-residue chain is 2-succinyl-6-hydroxy-2,4-cyclohexadiene-1-carboxylate synthase (252 aa).

This sequence belongs to the AB hydrolase superfamily. MenH family. Monomer.

The enzyme catalyses 5-enolpyruvoyl-6-hydroxy-2-succinyl-cyclohex-3-ene-1-carboxylate = (1R,6R)-6-hydroxy-2-succinyl-cyclohexa-2,4-diene-1-carboxylate + pyruvate. It functions in the pathway quinol/quinone metabolism; 1,4-dihydroxy-2-naphthoate biosynthesis; 1,4-dihydroxy-2-naphthoate from chorismate: step 3/7. Its pathway is quinol/quinone metabolism; menaquinone biosynthesis. Catalyzes a proton abstraction reaction that results in 2,5-elimination of pyruvate from 2-succinyl-5-enolpyruvyl-6-hydroxy-3-cyclohexene-1-carboxylate (SEPHCHC) and the formation of 2-succinyl-6-hydroxy-2,4-cyclohexadiene-1-carboxylate (SHCHC). In Escherichia coli (strain SMS-3-5 / SECEC), this protein is 2-succinyl-6-hydroxy-2,4-cyclohexadiene-1-carboxylate synthase.